The primary structure comprises 452 residues: General transcription and DNA repair factor IIH subunit TFB2 (452 aa).

This sequence belongs to the TFB2 family. In terms of assembly, component of the 7-subunit TFIIH core complex composed of XPB, XPD, TFB1/GTF2H1, GTF2H2/P44, TFB4/GTF2H3, TFB2/GTF2H4 and TFB5/GTF2H5, which is active in NER. The core complex associates with the 3-subunit CDK-activating kinase (CAK) module composed of CYCH1/cyclin H1, CDKD and MAT1/At4g30820 to form the 10-subunit holoenzyme (holo-TFIIH) active in transcription.

It localises to the nucleus. Component of the general transcription and DNA repair factor IIH (TFIIH) core complex, which is involved in general and transcription-coupled nucleotide excision repair (NER) of damaged DNA and, when complexed to CAK, in RNA transcription by RNA polymerase II. In NER, TFIIH acts by opening DNA around the lesion to allow the excision of the damaged oligonucleotide and its replacement by a new DNA fragment. In transcription, TFIIH has an essential role in transcription initiation. When the pre-initiation complex (PIC) has been established, TFIIH is required for promoter opening and promoter escape. Phosphorylation of the C-terminal tail (CTD) of the largest subunit of RNA polymerase II by the kinase module CAK controls the initiation of transcription. The polypeptide is General transcription and DNA repair factor IIH subunit TFB2 (Arabidopsis thaliana (Mouse-ear cress)).